The sequence spans 1206 residues: DNA polymerase (1206 aa).

It belongs to the DNA polymerase type-B family.

It carries out the reaction DNA(n) + a 2'-deoxyribonucleoside 5'-triphosphate = DNA(n+1) + diphosphate. In Pyramimonas orientalis virus (PoV01), this protein is DNA polymerase (dpo).